A 476-amino-acid chain; its full sequence is RuvB-like 1 (476 aa).

Residues methionine 1–valine 23 are disordered. Glycine 89–threonine 96 provides a ligand contact to ATP.

Belongs to the RuvB family. As to quaternary structure, forms homohexameric rings. May form a dodecamer with ruvb-2 made of two stacked hexameric rings. As to expression, expressed in gonadal cells.

The protein localises to the cytoplasm. It localises to the nucleus. It carries out the reaction ATP + H2O = ADP + phosphate + H(+). Possesses single-stranded DNA-stimulated ATPase and ATP dependent DNA helicase (3' to 5') activity suggesting a role in nuclear processes such as recombination and transcription. May participate in several chromatin remodeling complexes that mediate the ATP-dependent exchange of histones and remodel chromatin by shifting nucleosomes. Involvement in these complexes is likely required for transcriptional activation of selected genes and DNA repair in response to DNA damage. Involved in the Ce-Tor signaling pathway whereby it is required for the accumulation and localization of box C/D snoRNP to nucleoli to regulate ribosomal maturation and thus protein synthesis. Antagonizes the transcriptional activity of transcription factor pha-4, to control postembryonic development and adult longevity. Has a role in pharyngeal development. Has a role in gonadal development. In Caenorhabditis elegans, this protein is RuvB-like 1.